A 660-amino-acid polypeptide reads, in one-letter code: FAST kinase domain-containing protein 3, mitochondrial (660 aa).

The transit peptide at 1–57 directs the protein to the mitochondrion; sequence MALVTLRRNLYHLSDFRIHGALAALKTQQVNHVHKTVKEHLCPWFWSQHPGPIRVRF. An RAP domain is found at 591–649; the sequence is VALCIDGPKRFCLNSKHLLGKEATKQRHLRLLGYQVVQIPYYEIEMLKSRLELVDYLQG.

This sequence belongs to the FAST kinase family.

The protein resides in the mitochondrion. In terms of biological role, required for normal mitochondrial respiration. Increases steady-state levels and half-lives of a subset of mature mitochondrial mRNAs MT-ND2, MT-ND3, MT-CYTB, MT-CO2, and MT-ATP8/6. Promotes MT-CO1 mRNA translation and increases mitochondrial complex IV assembly and activity. The protein is FAST kinase domain-containing protein 3, mitochondrial (FASTKD3) of Bos taurus (Bovine).